Here is a 98-residue protein sequence, read N- to C-terminus: MTGPGPRRDEARLSAWVHGHVQGVGFRWWTRARALELGLTGFASNRPDGRVHVVAQGSREACEKLLELLRSGETPGSVDKVIADWAEPDATMTGFSER.

Residues 12–98 (RLSAWVHGHV…DATMTGFSER (87 aa)) form the Acylphosphatase-like domain. Active-site residues include R27 and N45.

This sequence belongs to the acylphosphatase family.

It carries out the reaction an acyl phosphate + H2O = a carboxylate + phosphate + H(+). The protein is Acylphosphatase (acyP) of Mycolicibacterium smegmatis (strain ATCC 700084 / mc(2)155) (Mycobacterium smegmatis).